We begin with the raw amino-acid sequence, 520 residues long: Apolipoprotein N-acyltransferase (520 aa).

Helical transmembrane passes span 12–32 (IFTYFIAIFSGIIGVLAFSPF), 33–53 (DYWGCAYLSLLGLIFVAKTAE), 58–78 (LWSAFLWGLAFFTFGINWVHV), 93–113 (VLVLVLAAYLALYPMLFAYLI), 122–142 (AMFPVIWTFTEFLRGWLFTGF), 168–188 (VTFFVMWVSAVIFNLLSVLLI), and 193–213 (WNVVIANLLLLTLVGGLSAYS). Residues 232–479 (AQGNIEQNLK…ETTLTHKVAA (248 aa)) form the CN hydrolase domain. Glu272 functions as the Proton acceptor in the catalytic mechanism. Residue Lys338 is part of the active site. Cys390 functions as the Nucleophile in the catalytic mechanism. A helical membrane pass occupies residues 484-504 (TPYAVFGNTAIYGLSLLLLLM).

The protein belongs to the CN hydrolase family. Apolipoprotein N-acyltransferase subfamily.

It is found in the cell inner membrane. It carries out the reaction N-terminal S-1,2-diacyl-sn-glyceryl-L-cysteinyl-[lipoprotein] + a glycerophospholipid = N-acyl-S-1,2-diacyl-sn-glyceryl-L-cysteinyl-[lipoprotein] + a 2-acyl-sn-glycero-3-phospholipid + H(+). The protein operates within protein modification; lipoprotein biosynthesis (N-acyl transfer). Its function is as follows. Catalyzes the phospholipid dependent N-acylation of the N-terminal cysteine of apolipoprotein, the last step in lipoprotein maturation. This chain is Apolipoprotein N-acyltransferase, found in Pasteurella multocida (strain Pm70).